Reading from the N-terminus, the 361-residue chain is MSGKAKARRAAMFFRGCSEDASGSTSGSTLLSEDENPDTNGVTRSWKIILSTMFTLTFLLVGLLSHQWLKETEVPQKSRQLYAIIAEYGSRLYKYQARLRMPKEQLELLKKESQTLENNFHKILLLIEQIDVLKALLRDMKDGTDNNHSWNTHGDPVEDPDHTEVLDEEMSNLVNYVLKKLREDQVQMADYALKSAGASIIEAGTSESYKNNKAKLYWHGISFLNHEMPPDIILQPDVYPGNCWAFPGSQGHTLIKLATKIIPTAVTMEHISEKVSPSGNISSAPKEFSVYGITKKCEGEEIFLGQFIYNKTGTTVQTFELQHAVSEYLLCVKLNIFSNWGHPKYTCLYRFRVHGTPGKHI.

Residues 1–47 are Nuclear-facing; that stretch reads MSGKAKARRAAMFFRGCSEDASGSTSGSTLLSEDENPDTNGVTRSWK. Positions 19–38 are disordered; the sequence is EDASGSTSGSTLLSEDENPD. A compositionally biased stretch (low complexity) spans 22 to 31; that stretch reads SGSTSGSTLL. Residues 48–69 traverse the membrane as a helical segment; it reads IILSTMFTLTFLLVGLLSHQWL. At 70 to 361 the chain is on the perinuclear space side; the sequence is KETEVPQKSR…RVHGTPGKHI (292 aa). Residues 103-129 adopt a coiled-coil conformation; that stretch reads KEQLELLKKESQTLENNFHKILLLIEQ. One can recognise an SUN domain in the interval 197-358; the sequence is GASIIEAGTS…YRFRVHGTPG (162 aa).

In terms of assembly, self-associates. Interacts with SYNE1 and SPAG4/SUN4. Proposed to form a spermatogenesis-specific LINC complex with SYNE1 during sperm head formation possibly implicating a SUN domain-based heterotrimer with SPAG4/SUN4 associating with SYNE1.

It is found in the membrane. Its subcellular location is the nucleus envelope. The protein resides in the nucleus inner membrane. In terms of biological role, as a probable component of the LINC (LInker of Nucleoskeleton and Cytoskeleton) complex, involved in the connection between the nuclear lamina and the cytoskeleton. The nucleocytoplasmic interactions established by the LINC complex play an important role in the transmission of mechanical forces across the nuclear envelope and in nuclear movement and positioning. May be involved in nuclear remodeling during sperm head formation in spermatogenesis. A probable SUN3:SYNE1 LINC complex may tether spermatid nuclei to posterior cytoskeletal structures such as the manchette. The sequence is that of SUN domain-containing protein 3 (SUN3) from Macaca fascicularis (Crab-eating macaque).